A 72-amino-acid chain; its full sequence is Mitotic-spindle organizing protein 1 (72 aa).

The protein belongs to the MOZART1 family. In terms of assembly, part of the gamma-tubulin complex.

The protein resides in the cytoplasm. Its subcellular location is the cytoskeleton. The protein localises to the microtubule organizing center. It is found in the spindle pole body. Functionally, required for gamma-tubulin complex recruitment to the microtubule organizing center (MTOC). The protein is Mitotic-spindle organizing protein 1 of Coccidioides immitis (strain RS) (Valley fever fungus).